Here is a 506-residue protein sequence, read N- to C-terminus: uncharacterized protein (506 aa).

It to group II intron maturases.

The protein localises to the plastid. Its subcellular location is the chloroplast. This is an uncharacterized protein from Euglena gracilis.